Reading from the N-terminus, the 102-residue chain is MALTKAELTDLLFENIGLNKREAKEIVECFYEEMRTALQNGDGVKLSGFGNFQLRTKPQRPGRNPKTGEEIPISARRVVTFHASQKLKSMVEANYRGEPNVN.

Residues 49-71 (FGNFQLRTKPQRPGRNPKTGEEI) form a disordered region.

This sequence belongs to the bacterial histone-like protein family. As to quaternary structure, heterodimer of an alpha and a beta chain.

In terms of biological role, this protein is one of the two subunits of integration host factor, a specific DNA-binding protein that functions in genetic recombination as well as in transcriptional and translational control. The protein is Integration host factor subunit alpha of Nitrosomonas eutropha (strain DSM 101675 / C91 / Nm57).